Reading from the N-terminus, the 176-residue chain is Mitochondrial inner membrane protein Mpv17 (176 aa).

The next 4 membrane-spanning stretches (helical) occupy residues 18–38 (VQVL…QQLV), 53–73 (TMVS…YKVL), 94–114 (GGFA…LNGL), and 131–151 (LITN…LVPL).

This sequence belongs to the peroxisomal membrane protein PXMP2/4 family. Ubiquitous. Expressed in pancreas, kidney, muscle, liver, lung, placenta, brain and heart.

Its subcellular location is the mitochondrion inner membrane. Its function is as follows. Non-selective channel that modulates the membrane potential under normal conditions and oxidative stress, and is involved in mitochondrial homeostasis. Involved in mitochondrial deoxynucleoside triphosphates (dNTP) pool homeostasis and mitochondrial DNA (mtDNA) maintenance. May be involved in the regulation of reactive oxygen species metabolism and the control of oxidative phosphorylation. In Homo sapiens (Human), this protein is Mitochondrial inner membrane protein Mpv17.